A 105-amino-acid polypeptide reads, in one-letter code: Transcription factor S (105 aa).

Residues Cys5, Cys8, Cys21, Cys24, Cys66, Cys69, Cys94, and Cys97 each coordinate Zn(2+). Residues 5–24 form a C4-type zinc finger; it reads CPKCNNIMLPKNGRLKCTVC. The TFIIS-type zinc finger occupies 62-102; that stretch reads TRIECPSCGNMEASWWLQQTRCADEPETRFYKCKKCGHTWR.

It belongs to the archaeal RpoM/eukaryotic RPA12/RPB9/RPC11 RNA polymerase family.

Functionally, induces RNA cleavage activity in the RNA polymerase. In its presence, the cleavage activity of the RNA polymerase truncates the RNA back to position +15 in a stepwise manner by releasing mainly dinucleotides from the 3'-end of the nascent RNA. The truncated RNAs are able to continue elongation. Involved in transcriptional proofreading and fidelity. Misincorporation of nucleotides during elongation of transcription leads to arrested elongation complexes which are rescued by TFS-promoted removal of a dinucleotide from the 3'-end. TFS is able to induce a cleavage resynthesis cycle in stalled elongation complexes (resulting from the next missing nucleotide or a reduced incorporation rate of a wrong nucleotide) preventing misincorporation and enabling proofreading in a post-incorporation manner. Pausing of elongation complexes is the main determinant of TFS-induced RNA cleavage. In Methanothermococcus thermolithotrophicus (Methanococcus thermolithotrophicus), this protein is Transcription factor S.